The following is a 188-amino-acid chain: Apolipoprotein M (188 aa).

Positions 1 to 22 form a signal peptide, not cleaved; that stretch reads MFHQIWAALLYFYGIILNSIYQ. 3 disulfides stabilise this stretch: Cys-23–Cys-167, Cys-95–Cys-183, and Cys-128–Cys-157. An N-linked (GlcNAc...) asparagine glycan is attached at Asn-135. Tetradecanoate-binding residues include Glu-136 and Arg-143.

This sequence belongs to the calycin superfamily. Lipocalin family. Highly divergent. Interacts with LRP2; LRP2 mediates APOM renal uptake and subsequent lysosomal degradation. As to expression, plasma protein. Expressed in liver and kidney.

The protein localises to the secreted. In terms of biological role, probably involved in lipid transport. Can bind sphingosine-1-phosphate, myristic acid, palmitic acid and stearic acid, retinol, all-trans-retinoic acid and 9-cis-retinoic acid. This chain is Apolipoprotein M (APOM), found in Homo sapiens (Human).